We begin with the raw amino-acid sequence, 940 residues long: Phagocyte signaling-impaired protein (940 aa).

One copy of the TPR repeat lies at 77–110 (STTLHVMTLCYKETDQLDKICQIFTSASKQLPGN).

It belongs to the MDM20/NAA25 family. In terms of assembly, component of the N-terminal acetyltransferase B (NatB) complex.

It is found in the lysosome. In terms of biological role, non-catalytic subunit of the NatB complex which catalyzes acetylation of the N-terminal methionine residues of proteins beginning with Met-Asp or Met-Glu. Has 2 roles in the larval immune response: required both for the phagocytic degradation of internalized bacteria and for the induction of Defensin in the fat body. Within the phagocytic blood cells, has a role in detection of infection and activation of the humoral immune response. The polypeptide is Phagocyte signaling-impaired protein (Aedes aegypti (Yellowfever mosquito)).